The primary structure comprises 473 residues: ATP synthase subunit beta (473 aa).

158 to 165 (GGAGVGKT) contributes to the ATP binding site.

The protein belongs to the ATPase alpha/beta chains family. As to quaternary structure, F-type ATPases have 2 components, CF(1) - the catalytic core - and CF(0) - the membrane proton channel. CF(1) has five subunits: alpha(3), beta(3), gamma(1), delta(1), epsilon(1). CF(0) has three main subunits: a(1), b(2) and c(9-12). The alpha and beta chains form an alternating ring which encloses part of the gamma chain. CF(1) is attached to CF(0) by a central stalk formed by the gamma and epsilon chains, while a peripheral stalk is formed by the delta and b chains.

Its subcellular location is the cell membrane. It catalyses the reaction ATP + H2O + 4 H(+)(in) = ADP + phosphate + 5 H(+)(out). Its function is as follows. Produces ATP from ADP in the presence of a proton gradient across the membrane. The catalytic sites are hosted primarily by the beta subunits. This Bacillus velezensis (strain DSM 23117 / BGSC 10A6 / LMG 26770 / FZB42) (Bacillus amyloliquefaciens subsp. plantarum) protein is ATP synthase subunit beta.